The primary structure comprises 194 residues: NADPH-flavin oxidoreductase (194 aa).

This sequence belongs to the non-flavoprotein flavin reductase family. Homodimer. It can form an isobutylamine N-hydroxylase two component enzyme system formed of a flavin reductase component (VlmR) and a monooxygenase component (VlmH).

It catalyses the reaction FADH2 + NADP(+) = FAD + NADPH + 2 H(+). It carries out the reaction FMNH2 + NADP(+) = FMN + NADPH + 2 H(+). Functionally, involved in the biosynthesis of the azoxy antibiotic valanimycin, which has an antitumor activity. Catalyzes the reduction of FAD/FMN to FADH(2)/FMNH(2) which are subsequently used for the hydroxylation of isobutylamine by the isobutylamine N-hydroxylase VlmH. It can reduce either FAD or flavin mononucleotide (FMN) but prefers FAD. The enzyme has a strong preference for NADPH as acceptor. The chain is NADPH-flavin oxidoreductase from Streptomyces viridifaciens.